We begin with the raw amino-acid sequence, 229 residues long: Lipoprotein-releasing system ATP-binding protein LolD (229 aa).

The region spanning 6 to 229 (LELDAIERTY…DGHLTPYVPA (224 aa)) is the ABC transporter domain. 42 to 49 (GPSGSGKS) is a binding site for ATP.

This sequence belongs to the ABC transporter superfamily. Lipoprotein translocase (TC 3.A.1.125) family. In terms of assembly, the complex is composed of two ATP-binding proteins (LolD) and two transmembrane proteins (LolC and LolE).

The protein localises to the cell inner membrane. Part of the ABC transporter complex LolCDE involved in the translocation of mature outer membrane-directed lipoproteins, from the inner membrane to the periplasmic chaperone, LolA. Responsible for the formation of the LolA-lipoprotein complex in an ATP-dependent manner. This chain is Lipoprotein-releasing system ATP-binding protein LolD, found in Maricaulis maris (strain MCS10) (Caulobacter maris).